We begin with the raw amino-acid sequence, 294 residues long: Probable 2-(5''-triphosphoribosyl)-3'-dephosphocoenzyme-A synthase (294 aa).

It belongs to the CitG/MdcB family.

The enzyme catalyses 3'-dephospho-CoA + ATP = 2'-(5''-triphospho-alpha-D-ribosyl)-3'-dephospho-CoA + adenine. In Streptococcus pyogenes serotype M5 (strain Manfredo), this protein is Probable 2-(5''-triphosphoribosyl)-3'-dephosphocoenzyme-A synthase.